The following is a 59-amino-acid chain: UPF0181 protein YoaH (59 aa).

It belongs to the UPF0181 family.

This Escherichia coli O127:H6 (strain E2348/69 / EPEC) protein is UPF0181 protein YoaH.